The chain runs to 442 residues: Protein translocase subunit SecY (442 aa).

10 helical membrane-spanning segments follow: residues 29 to 49 (LITI…VPDI), 69 to 89 (IFTG…LPYI), 126 to 146 (YIAF…LLRP), 153 to 173 (PLFI…VMWI), 182 to 202 (IGNG…PQTL), 217 to 237 (ITAV…IVFV), 274 to 294 (VMPI…AGFA), 320 to 340 (VYTV…ASLI), 377 to 397 (LTFL…FVEQ), and 400 to 420 (GVTT…GVAI).

The protein belongs to the SecY/SEC61-alpha family. As to quaternary structure, component of the Sec protein translocase complex. Heterotrimer consisting of SecY, SecE and SecG subunits. The heterotrimers can form oligomers, although 1 heterotrimer is thought to be able to translocate proteins. Interacts with the ribosome. Interacts with SecDF, and other proteins may be involved. Interacts with SecA.

The protein localises to the cell inner membrane. It is found in the cellular thylakoid membrane. In terms of biological role, the central subunit of the protein translocation channel SecYEG. Consists of two halves formed by TMs 1-5 and 6-10. These two domains form a lateral gate at the front which open onto the bilayer between TMs 2 and 7, and are clamped together by SecE at the back. The channel is closed by both a pore ring composed of hydrophobic SecY resides and a short helix (helix 2A) on the extracellular side of the membrane which forms a plug. The plug probably moves laterally to allow the channel to open. The ring and the pore may move independently. In Synechocystis sp. (strain ATCC 27184 / PCC 6803 / Kazusa), this protein is Protein translocase subunit SecY.